The sequence spans 476 residues: UDP-N-acetylmuramate--L-alanine ligase (476 aa).

121 to 127 (GAHGKTT) is an ATP binding site.

The protein belongs to the MurCDEF family.

Its subcellular location is the cytoplasm. The enzyme catalyses UDP-N-acetyl-alpha-D-muramate + L-alanine + ATP = UDP-N-acetyl-alpha-D-muramoyl-L-alanine + ADP + phosphate + H(+). The protein operates within cell wall biogenesis; peptidoglycan biosynthesis. Its function is as follows. Cell wall formation. The sequence is that of UDP-N-acetylmuramate--L-alanine ligase from Clavibacter michiganensis subsp. michiganensis (strain NCPPB 382).